We begin with the raw amino-acid sequence, 319 residues long: Acetyl-coenzyme A carboxylase carboxyl transferase subunit alpha (319 aa).

Residues 39–293 (RLQKKSNDLT…KAVLEKQLHE (255 aa)) form the CoA carboxyltransferase C-terminal domain.

It belongs to the AccA family. In terms of assembly, acetyl-CoA carboxylase is a heterohexamer composed of biotin carboxyl carrier protein (AccB), biotin carboxylase (AccC) and two subunits each of ACCase subunit alpha (AccA) and ACCase subunit beta (AccD).

The protein localises to the cytoplasm. The catalysed reaction is N(6)-carboxybiotinyl-L-lysyl-[protein] + acetyl-CoA = N(6)-biotinyl-L-lysyl-[protein] + malonyl-CoA. The protein operates within lipid metabolism; malonyl-CoA biosynthesis; malonyl-CoA from acetyl-CoA: step 1/1. In terms of biological role, component of the acetyl coenzyme A carboxylase (ACC) complex. First, biotin carboxylase catalyzes the carboxylation of biotin on its carrier protein (BCCP) and then the CO(2) group is transferred by the carboxyltransferase to acetyl-CoA to form malonyl-CoA. This Neisseria meningitidis serogroup C / serotype 2a (strain ATCC 700532 / DSM 15464 / FAM18) protein is Acetyl-coenzyme A carboxylase carboxyl transferase subunit alpha.